A 243-amino-acid chain; its full sequence is Carboxy-S-adenosyl-L-methionine synthase (243 aa).

S-adenosyl-L-methionine is bound by residues Tyr40, 65–67 (GSS), 90–91 (DN), 118–119 (DI), Asn133, and Arg200.

This sequence belongs to the class I-like SAM-binding methyltransferase superfamily. Cx-SAM synthase family. Homodimer.

It carries out the reaction prephenate + S-adenosyl-L-methionine = carboxy-S-adenosyl-L-methionine + 3-phenylpyruvate + H2O. Its function is as follows. Catalyzes the conversion of S-adenosyl-L-methionine (SAM) to carboxy-S-adenosyl-L-methionine (Cx-SAM). This Shewanella frigidimarina (strain NCIMB 400) protein is Carboxy-S-adenosyl-L-methionine synthase.